A 396-amino-acid chain; its full sequence is uncharacterized protein (396 aa).

Belongs to the NAD(P)-dependent epimerase/dehydratase family. It depends on NAD(+) as a cofactor. The cofactor is NADP(+).

In terms of biological role, putative nucleotide sugar epimerase/dehydrogenase. This is an uncharacterized protein from Sinorhizobium fredii (strain NBRC 101917 / NGR234).